The following is a 504-amino-acid chain: uncharacterized protein (504 aa).

The next 3 membrane-spanning stretches (helical) occupy residues 146 to 166 (TSAG…INIA), 196 to 216 (SSAA…ADVL), and 330 to 350 (SMAL…VAVA). 372-492 (FLNIDVPLQA…EIAYGVARTR (121 aa)) contacts a nucleoside 3',5'-cyclic phosphate.

The protein resides in the cell membrane. This is an uncharacterized protein from Mycobacterium tuberculosis (strain CDC 1551 / Oshkosh).